The following is a 460-amino-acid chain: MGKEKGHINVVVIGHVDSGKSTTTGHLIYKCGGIDKRTIEKFEKEATELGKGSFKYAWVLDKLKAERERGITIDIALWKFETPKYNVTVIDAPGHRDFIKNMITGTSQADCAILIIGGGTGEFEAGISKDGQTREHALLAYTLGVKQLIVAVNKMDTTGWSQARFEEIVKETSNFIKKVGFNPKTVPFVPVSGFQGDNMIEPTTNMPWYQGWQKETKAGVVKGKTLLEAIDSIEPPARPTDKPLRLPLQDVYKIGGIGTVPVGRVETGVIKPGMIVTFAPAGVTTEVKSVEMHHESLDAGLPGDNVGFNVKNVSVKDIRRGNVCGDSKNDPPMGCASFTAQVIILNHPGQISAGYSPVLDCHTAHIACKFAELIEKIDRRSGKKIEESPKFVKSGDACIAKMVPSKPMCVEAFTDYAPLGRFAVRDMRQTVAVGVIKAVEKVAPGAAKVTKAAVKAGAKK.

Glycine 2 carries the post-translational modification N,N,N-trimethylglycine. The residue at position 3 (lysine 3) is an N6,N6-dimethyllysine; alternate. Lysine 3 is modified (N6-methyllysine; alternate). The 236-residue stretch at lysine 5–threonine 240 folds into the tr-type G domain. Residues glycine 14–serine 21 are G1. Glycine 14–serine 21 contacts GTP. An N6-methyllysine modification is found at lysine 30. Residues glycine 70 to aspartate 74 form a G2 region. Lysine 79 carries the post-translational modification N6,N6,N6-trimethyllysine. The tract at residues aspartate 91 to glycine 94 is G3. Residues aspartate 91–histidine 95 and asparagine 153–aspartate 156 each bind GTP. The segment at asparagine 153–aspartate 156 is G4. A G5 region spans residues serine 192 to phenylalanine 194. Lysine 316 carries the post-translational modification N6,N6-dimethyllysine; alternate. Lysine 316 is modified (N6-methyllysine; alternate). Lysine 390 carries the N6-methyllysine modification.

Belongs to the TRAFAC class translation factor GTPase superfamily. Classic translation factor GTPase family. EF-Tu/EF-1A subfamily.

The protein localises to the cytoplasm. Functionally, this protein promotes the GTP-dependent binding of aminoacyl-tRNA to the A-site of ribosomes during protein biosynthesis. This is Elongation factor 1-alpha-B (tef102) from Schizosaccharomyces pombe (strain 972 / ATCC 24843) (Fission yeast).